A 177-amino-acid chain; its full sequence is MSRIAKSPITLPSGVDVTINGTDVSVKGSKGALSKTFNHAVSVSLEDGVVTVAPKNESKNAWAQAGTARSIINNMVLGVTEGFEKKLQLVGVGYRAQAQGKVLNLTLGFSHPVNHELPEGVTVETPSQTEIVVKGADKQVVGQVAAEIRGYRPPEPYKGKGVKYADEYILRKEAKKK.

It belongs to the universal ribosomal protein uL6 family. As to quaternary structure, part of the 50S ribosomal subunit.

In terms of biological role, this protein binds to the 23S rRNA, and is important in its secondary structure. It is located near the subunit interface in the base of the L7/L12 stalk, and near the tRNA binding site of the peptidyltransferase center. The protein is Large ribosomal subunit protein uL6 of Hydrogenovibrio crunogenus (strain DSM 25203 / XCL-2) (Thiomicrospira crunogena).